We begin with the raw amino-acid sequence, 396 residues long: 1-deoxy-D-xylulose 5-phosphate reductoisomerase (396 aa).

Thr-10, Gly-11, Ser-12, Ile-13, Asn-38, and Asn-123 together coordinate NADPH. 1-deoxy-D-xylulose 5-phosphate is bound at residue Lys-124. Glu-125 serves as a coordination point for NADPH. Asp-149 is a Mn(2+) binding site. The 1-deoxy-D-xylulose 5-phosphate site is built by Ser-150, Glu-151, Ser-185, and His-208. Glu-151 is a Mn(2+) binding site. Gly-214 contributes to the NADPH binding site. Ser-221, Asn-226, Lys-227, and Glu-230 together coordinate 1-deoxy-D-xylulose 5-phosphate. Glu-230 is a binding site for Mn(2+).

Belongs to the DXR family. It depends on Mg(2+) as a cofactor. Requires Mn(2+) as cofactor.

The catalysed reaction is 2-C-methyl-D-erythritol 4-phosphate + NADP(+) = 1-deoxy-D-xylulose 5-phosphate + NADPH + H(+). Its pathway is isoprenoid biosynthesis; isopentenyl diphosphate biosynthesis via DXP pathway; isopentenyl diphosphate from 1-deoxy-D-xylulose 5-phosphate: step 1/6. In terms of biological role, catalyzes the NADPH-dependent rearrangement and reduction of 1-deoxy-D-xylulose-5-phosphate (DXP) to 2-C-methyl-D-erythritol 4-phosphate (MEP). The protein is 1-deoxy-D-xylulose 5-phosphate reductoisomerase of Shewanella halifaxensis (strain HAW-EB4).